The primary structure comprises 282 residues: 4-hydroxy-3-methylbut-2-enyl diphosphate reductase (282 aa).

C14 contributes to the [4Fe-4S] cluster binding site. (2E)-4-hydroxy-3-methylbut-2-enyl diphosphate-binding residues include H43 and H78. Positions 43 and 78 each coordinate dimethylallyl diphosphate. Isopentenyl diphosphate contacts are provided by H43 and H78. Position 100 (C100) interacts with [4Fe-4S] cluster. (2E)-4-hydroxy-3-methylbut-2-enyl diphosphate is bound at residue H128. H128 serves as a coordination point for dimethylallyl diphosphate. H128 lines the isopentenyl diphosphate pocket. E130 serves as the catalytic Proton donor. T164 serves as a coordination point for (2E)-4-hydroxy-3-methylbut-2-enyl diphosphate. C192 is a binding site for [4Fe-4S] cluster. 4 residues coordinate (2E)-4-hydroxy-3-methylbut-2-enyl diphosphate: S220, S221, N222, and S266. S220, S221, N222, and S266 together coordinate dimethylallyl diphosphate. Residues S220, S221, N222, and S266 each contribute to the isopentenyl diphosphate site.

This sequence belongs to the IspH family. [4Fe-4S] cluster serves as cofactor.

It carries out the reaction isopentenyl diphosphate + 2 oxidized [2Fe-2S]-[ferredoxin] + H2O = (2E)-4-hydroxy-3-methylbut-2-enyl diphosphate + 2 reduced [2Fe-2S]-[ferredoxin] + 2 H(+). The catalysed reaction is dimethylallyl diphosphate + 2 oxidized [2Fe-2S]-[ferredoxin] + H2O = (2E)-4-hydroxy-3-methylbut-2-enyl diphosphate + 2 reduced [2Fe-2S]-[ferredoxin] + 2 H(+). It functions in the pathway isoprenoid biosynthesis; dimethylallyl diphosphate biosynthesis; dimethylallyl diphosphate from (2E)-4-hydroxy-3-methylbutenyl diphosphate: step 1/1. The protein operates within isoprenoid biosynthesis; isopentenyl diphosphate biosynthesis via DXP pathway; isopentenyl diphosphate from 1-deoxy-D-xylulose 5-phosphate: step 6/6. Catalyzes the conversion of 1-hydroxy-2-methyl-2-(E)-butenyl 4-diphosphate (HMBPP) into a mixture of isopentenyl diphosphate (IPP) and dimethylallyl diphosphate (DMAPP). Acts in the terminal step of the DOXP/MEP pathway for isoprenoid precursor biosynthesis. This Clostridium perfringens (strain SM101 / Type A) protein is 4-hydroxy-3-methylbut-2-enyl diphosphate reductase.